The sequence spans 235 residues: Ubiquinone biosynthesis O-methyltransferase (235 aa).

S-adenosyl-L-methionine is bound by residues Arg-40, Gly-60, Asp-81, and Met-125.

It belongs to the methyltransferase superfamily. UbiG/COQ3 family.

The catalysed reaction is a 3-demethylubiquinol + S-adenosyl-L-methionine = a ubiquinol + S-adenosyl-L-homocysteine + H(+). It catalyses the reaction a 3-(all-trans-polyprenyl)benzene-1,2-diol + S-adenosyl-L-methionine = a 2-methoxy-6-(all-trans-polyprenyl)phenol + S-adenosyl-L-homocysteine + H(+). It functions in the pathway cofactor biosynthesis; ubiquinone biosynthesis. O-methyltransferase that catalyzes the 2 O-methylation steps in the ubiquinone biosynthetic pathway. The protein is Ubiquinone biosynthesis O-methyltransferase of Nitrosomonas europaea (strain ATCC 19718 / CIP 103999 / KCTC 2705 / NBRC 14298).